We begin with the raw amino-acid sequence, 114 residues long: SOSS complex subunit C homolog (114 aa).

Residues 1–10 (MAFQQHGNQE) are compositionally biased toward polar residues. The segment at 1–61 (MAFQQHGNQE…AGNTSASRIH (61 aa)) is disordered.

This sequence belongs to the SOSS-C family.

In Nematostella vectensis (Starlet sea anemone), this protein is SOSS complex subunit C homolog.